We begin with the raw amino-acid sequence, 226 residues long: 7-cyano-7-deazaguanine synthase (226 aa).

8-18 (ISGGLDSTTCL) lines the ATP pocket. Positions 188, 198, 201, and 204 each coordinate Zn(2+).

Belongs to the QueC family. Zn(2+) serves as cofactor.

The enzyme catalyses 7-carboxy-7-deazaguanine + NH4(+) + ATP = 7-cyano-7-deazaguanine + ADP + phosphate + H2O + H(+). It functions in the pathway purine metabolism; 7-cyano-7-deazaguanine biosynthesis. Catalyzes the ATP-dependent conversion of 7-carboxy-7-deazaguanine (CDG) to 7-cyano-7-deazaguanine (preQ(0)). The chain is 7-cyano-7-deazaguanine synthase from Coxiella burnetii (strain RSA 331 / Henzerling II).